A 657-amino-acid chain; its full sequence is Transmembrane protein 232 (657 aa).

2 helical membrane passes run 168-188 (IGYLVFLRLFIFFLHGHLESF) and 353-373 (WAWNVVYIYTVILAEICLYAA).

Its subcellular location is the membrane. In terms of biological role, plays a critical role for male fertility and sperm motility by regulating sperm cytoplasm removal and maintaining axoneme integrity. The protein is Transmembrane protein 232 (TMEM232) of Homo sapiens (Human).